We begin with the raw amino-acid sequence, 134 residues long: Small ribosomal subunit protein uS9 (134 aa).

Residues 109 to 134 are disordered; the sequence is DARRTEPHKPSKSSKGPRARRQKSYR. The segment covering 118 to 134 has biased composition (basic residues); sequence PSKSSKGPRARRQKSYR.

This sequence belongs to the universal ribosomal protein uS9 family.

This Methanococcus vannielii (strain ATCC 35089 / DSM 1224 / JCM 13029 / OCM 148 / SB) protein is Small ribosomal subunit protein uS9.